Consider the following 413-residue polypeptide: SET and MYND domain-containing protein DDB_G0273591 (413 aa).

An SET domain is found at 6–311 (DGLKLSNSEL…KGDQINISYL (306 aa)). An MYND-type zinc finger spans residues 51–95 (CYNCIKLIKSPSPQQVPRCFGCNEVWYCSEKCKQDNQAKHQHYEC). Residues 205 to 232 (DNNNNNNNNNNNNNNNNNNNNNNNNNNN) are disordered. The stretch at 216–243 (NNNNNNNNNNNNNNNNNNNIEELIKLIR) forms a coiled coil.

Belongs to the class V-like SAM-binding methyltransferase superfamily.

In terms of biological role, probable methyltransferase. The polypeptide is SET and MYND domain-containing protein DDB_G0273591 (Dictyostelium discoideum (Social amoeba)).